The sequence spans 351 residues: Phosphoribosylformylglycinamidine cyclo-ligase (351 aa).

It belongs to the AIR synthase family.

It is found in the cytoplasm. It catalyses the reaction 2-formamido-N(1)-(5-O-phospho-beta-D-ribosyl)acetamidine + ATP = 5-amino-1-(5-phospho-beta-D-ribosyl)imidazole + ADP + phosphate + H(+). It functions in the pathway purine metabolism; IMP biosynthesis via de novo pathway; 5-amino-1-(5-phospho-D-ribosyl)imidazole from N(2)-formyl-N(1)-(5-phospho-D-ribosyl)glycinamide: step 2/2. The protein is Phosphoribosylformylglycinamidine cyclo-ligase of Azotobacter vinelandii (strain DJ / ATCC BAA-1303).